Consider the following 2289-residue polypeptide: Protein Ycf2 (2289 aa).

1643-1650 (GSIGTGRS) is an ATP binding site.

Belongs to the Ycf2 family.

It is found in the plastid. The protein resides in the chloroplast stroma. Its function is as follows. Probable ATPase of unknown function. Its presence in a non-photosynthetic plant (Epifagus virginiana) and experiments in tobacco indicate that it has an essential function which is probably not related to photosynthesis. The sequence is that of Protein Ycf2 from Aethionema grandiflorum (Persian stone-cress).